The following is a 1076-amino-acid chain: Serine/threonine-protein phosphatase 6 regulatory ankyrin repeat subunit C (1076 aa).

ANK repeat units lie at residues 7 to 36 (TDQP…NINV), 40 to 69 (ERRT…NVNA), 73 to 102 (LWLT…DVNA), 106 to 135 (LWQT…SLNV), 139 to 168 (SGRS…SLNV), 172 to 201 (KERQ…DLGC), 205 to 234 (KGYG…EIDE), 238 to 267 (FGNT…NVNQ), 271 to 301 (KGFT…DVNY), 305 to 334 (EGKS…EIDC), 338 to 367 (FGNT…DTAR), 371 to 400 (HDMF…LYSI), 422 to 451 (LGRT…DLRR), 455 to 484 (FGRT…GVNE), 488 to 545 (KGCS…DPSL), 549 to 579 (QGYT…CLED), 584 to 613 (IPVS…NLDV), 617 to 646 (KGRT…SALI), 651 to 680 (RKWT…RADI), 687 to 716 (YGQT…TADA), 720 to 749 (RGRT…FVLC), 753 to 782 (KGRT…STDP), 790 to 819 (SGYS…FSYL), 822 to 852 (NPFT…KIVN), 857 to 886 (KGRT…EVNA), 890 to 920 (TGRT…DLTV), 924 to 953 (NKNT…DLGL), and 960 to 989 (ALQM…TVLA). Residues 502–514 (YRRAEPHTPSSHD) are compositionally biased toward basic and acidic residues. A disordered region spans residues 502 to 522 (YRRAEPHTPSSHDAEEDEPLK). A phosphoserine mark is found at Ser1028 and Ser1075.

Protein phosphatase 6 (PP6) holoenzyme is proposed to be a heterotrimeric complex formed by the catalytic subunit, a SAPS domain-containing subunit (PP6R) and an ankyrin repeat-domain containing regulatory subunit (ARS). Interacts with PPP6R1.

Its function is as follows. Putative regulatory subunit of protein phosphatase 6 (PP6) that may be involved in the recognition of phosphoprotein substrates. This chain is Serine/threonine-protein phosphatase 6 regulatory ankyrin repeat subunit C (ANKRD52), found in Homo sapiens (Human).